The sequence spans 239 residues: Ribose-5-phosphate isomerase A (239 aa).

Substrate is bound by residues 34–37 (TGST), 94–97 (DGAD), and 107–110 (KGGG). Glu116 (proton acceptor) is an active-site residue. Residue Lys134 coordinates substrate.

Belongs to the ribose 5-phosphate isomerase family. Homodimer.

The catalysed reaction is aldehydo-D-ribose 5-phosphate = D-ribulose 5-phosphate. Its pathway is carbohydrate degradation; pentose phosphate pathway; D-ribose 5-phosphate from D-ribulose 5-phosphate (non-oxidative stage): step 1/1. Catalyzes the reversible conversion of ribose-5-phosphate to ribulose 5-phosphate. This chain is Ribose-5-phosphate isomerase A, found in Treponema denticola (strain ATCC 35405 / DSM 14222 / CIP 103919 / JCM 8153 / KCTC 15104).